We begin with the raw amino-acid sequence, 63 residues long: Cytochrome b-c1 complex subunit 9 (63 aa).

The Mitochondrial matrix portion of the chain corresponds to alanine 2–phenylalanine 21. A helical transmembrane segment spans residues alanine 22 to isoleucine 47. The Mitochondrial intermembrane segment spans residues asparagine 48–lysine 63.

It belongs to the UQCR10/QCR9 family. As to quaternary structure, component of the ubiquinol-cytochrome c oxidoreductase (cytochrome b-c1 complex, complex III, CIII), a multisubunit enzyme composed of 11 subunits. The complex is composed of 3 respiratory subunits cytochrome b, cytochrome c1 and Rieske protein UQCRFS1, 2 core protein subunits UQCRC1/QCR1 and UQCRC2/QCR2, and 6 low-molecular weight protein subunits UQCRH/QCR6, UQCRB/QCR7, UQCRQ/QCR8, UQCR10/QCR9, UQCR11/QCR10 and subunit 9, the cleavage product of Rieske protein UQCRFS1. The complex exists as an obligatory dimer and forms supercomplexes (SCs) in the inner mitochondrial membrane with NADH-ubiquinone oxidoreductase (complex I, CI) and cytochrome c oxidase (complex IV, CIV), resulting in different assemblies (supercomplex SCI(1)III(2)IV(1) and megacomplex MCI(2)III(2)IV(2)). Interacts with STMP1.

It is found in the mitochondrion inner membrane. Component of the ubiquinol-cytochrome c oxidoreductase, a multisubunit transmembrane complex that is part of the mitochondrial electron transport chain which drives oxidative phosphorylation. The respiratory chain contains 3 multisubunit complexes succinate dehydrogenase (complex II, CII), ubiquinol-cytochrome c oxidoreductase (cytochrome b-c1 complex, complex III, CIII) and cytochrome c oxidase (complex IV, CIV), that cooperate to transfer electrons derived from NADH and succinate to molecular oxygen, creating an electrochemical gradient over the inner membrane that drives transmembrane transport and the ATP synthase. The cytochrome b-c1 complex catalyzes electron transfer from ubiquinol to cytochrome c, linking this redox reaction to translocation of protons across the mitochondrial inner membrane, with protons being carried across the membrane as hydrogens on the quinol. In the process called Q cycle, 2 protons are consumed from the matrix, 4 protons are released into the intermembrane space and 2 electrons are passed to cytochrome c. The polypeptide is Cytochrome b-c1 complex subunit 9 (UQCR10) (Homo sapiens (Human)).